The sequence spans 311 residues: L-lactate dehydrogenase 2 (311 aa).

NAD(+)-binding residues include V14, D35, and R40. R90 lines the substrate pocket. NAD(+) contacts are provided by residues S103, 120–122 (ATN), and T145. Residue 122–125 (NPCD) participates in substrate binding. A substrate-binding site is contributed by 150 to 153 (DTTR). H177 (proton acceptor) is an active-site residue. T230 contributes to the substrate binding site.

Belongs to the LDH/MDH superfamily. LDH family. Homotetramer.

The protein localises to the cytoplasm. It catalyses the reaction (S)-lactate + NAD(+) = pyruvate + NADH + H(+). It functions in the pathway fermentation; pyruvate fermentation to lactate; (S)-lactate from pyruvate: step 1/1. Catalyzes the conversion of lactate to pyruvate. The sequence is that of L-lactate dehydrogenase 2 from Listeria innocua serovar 6a (strain ATCC BAA-680 / CLIP 11262).